A 486-amino-acid polypeptide reads, in one-letter code: Retrograde regulation protein 3 (486 aa).

Residues E27–T35 carry the 9aaTAD 1 motif. Polar residues-rich tracts occupy residues N75–T94 and S101–G130. The disordered stretch occupies residues N75 to G130. Residues S81, S123, and S142 each carry the phosphoserine modification. Position 150 is a phosphothreonine (T150). A 9aaTAD 2 motif is present at residues S189–T197. Residues S227, S236, and S241 each carry the phosphoserine modification. Residues R243 to L274 are disordered. Over residues S246–E263 the composition is skewed to polar residues. Phosphoserine is present on S269. The 60-residue stretch at R285–L344 folds into the bHLH domain. The segment at A374–E395 is disordered.

In terms of assembly, binds DNA as a heterodimer with RTG1.

It is found in the nucleus. Functionally, transcription factor that regulates CIT2 gene expression. Binds to two identical sites oriented as inverted repeats 28 bp apart in a regulatory upstream activation sequence element (UASR) in the CIT2 promoter. The core binding site is 5'-GGTCAC-3'. This chain is Retrograde regulation protein 3 (RTG3), found in Saccharomyces cerevisiae (strain ATCC 204508 / S288c) (Baker's yeast).